A 2387-amino-acid chain; its full sequence is Paternally-expressed gene 3 protein (2387 aa).

Residues 44 to 126 (HQRFRNFLYV…ALLEDYEAMY (83 aa)) enclose the SCAN box domain. Disordered regions lie at residues 127–194 (EPED…RDLA), 262–305 (DGHS…ICEA), 321–371 (ARSS…AFGG), and 392–423 (RYHF…EARR). 4 stretches are compositionally biased toward basic and acidic residues: residues 160–179 (SERE…DRWP), 291–305 (PETK…ICEA), 321–364 (ARSS…ERGP), and 404–423 (HDPR…EARR). Residues 451–473 (YVCDECGRSFAVISEFVEHQIVH) form a C2H2-type 1 zinc finger. The tract at residues 492–542 (SEAQSRPEGARRSEGAQAAGLAEHRGGQAQEHLRGSGDEEQDEPFLPSPTF) is disordered. Positions 513-528 (AEHRGGQAQEHLRGSG) are enriched in basic and acidic residues. 2 consecutive C2H2-type zinc fingers follow at residues 555 to 577 (YECK…QKIH) and 610 to 632 (YECK…QKTH). The segment at 668 to 690 (YDFREGGDAFGRSSDFMEHQKIH) adopts a C2H2-type 4; degenerate zinc-finger fold. Disordered stretches follow at residues 704–747 (PLLH…EARG), 764–797 (FRPP…ESPY), and 820–858 (DHLA…NIER). Residues 711–720 (MPGSQKSHTI) are compositionally biased toward polar residues. A compositionally biased stretch (basic residues) spans 846–856 (HQKARAKKKNI). A C2H2-type 5 zinc finger spans residues 884-906 (YECLECGEFFVRSSELAEHQKIH). Repeat copies occupy residues 965 to 973 (PAQTSYAVE), 974 to 982 (PAQTSYAEE), 983 to 991 (PAQTSYTEA), 1001 to 1009 (PAQTSCIEE), 1010 to 1018 (PAQTSYTNP), 1028 to 1036 (PAQTSYTEA), 1046 to 1054 (PAQTSCIEE), 1055 to 1063 (PAQTSYTNP), 1073 to 1081 (PAQTSYTEA), 1091 to 1099 (PAQTNYTEE), 1109 to 1117 (PSQTSCIEE), 1118 to 1126 (PAQTSYTDP), 1136 to 1144 (PAQTSYTQE), 1145 to 1153 (PAQTSCTEE), 1154 to 1162 (PAQTSCTEE), 1163 to 1171 (PAQTSYTQE), 1172 to 1180 (PAQTSYTKE), 1190 to 1198 (PAQTSCIEE), 1199 to 1207 (PAQTNYTKE), 1217 to 1225 (PAQTSYTDP), 1235 to 1243 (PAQTNYTVE), 1253 to 1261 (PSQTSCIEE), 1280 to 1288 (PAQTSCTEE), 1289 to 1297 (PAQTSYTQE), 1298 to 1306 (PAQTSCTEE), 1307 to 1315 (PAQTSCTEE), 1316 to 1324 (PAQTSYTQE), 1325 to 1333 (PAQTSCTEE), 1334 to 1342 (PAQTSYTQE), 1343 to 1351 (PAQTSCTEE), 1352 to 1360 (PAQTSYTEE), 1361 to 1369 (PAQTSYTEE), 1370 to 1378 (PAQTSYTQE), 1379 to 1387 (PAQTSCTEE), 1388 to 1396 (PAQTSYTEE), 1397 to 1405 (PAQTSYTEE), 1406 to 1414 (PAQTSYTQE), 1415 to 1423 (PAQTSYTEE), 1424 to 1432 (PAQTSYTEE), 1433 to 1441 (PAQTSYAQE), 1442 to 1450 (PAQTSYAEE), 1451 to 1459 (PAQTSYAEE), 1460 to 1468 (PAQTSYAEE), 1469 to 1477 (PAQTSYTQE), 1478 to 1486 (PAQTNYTEE), 1496 to 1504 (PAQTSYAEE), 1505 to 1513 (PAQTSYPEE), 1514 to 1522 (PAQTSYAEE), 1523 to 1531 (PAQTSYAEE), 1532 to 1540 (PAQTSYPEE), 1541 to 1549 (PAQTSYTEE), 1550 to 1558 (PAQTSYAKE), 1559 to 1567 (PAQTSYPEE), 1568 to 1576 (PAQTSYAEE), 1577 to 1585 (PAQTSYAEE), 1586 to 1594 (PAQTSYAEE), and 1595 to 1603 (PAQTSYSEE). Polar residues-rich tracts occupy residues 965–989 (PAQT…TSYT) and 1001–1020 (PAQT…NPAA). Residues 965–1603 (PAQTSYAVEP…EPAQTSYSEE (639 aa)) form a 37 X 9 AA repeat of P-A-Q-T-X-Y-X-X-E region. The disordered stretch occupies residues 965-1651 (PAQTSYAVEP…RPDMPRNQPR (687 aa)). Residues 1046–1079 (PAQTSCIEEPAQTSYTNPAAETSYTEEPAQTSYT) are compositionally biased toward polar residues. 5 stretches are compositionally biased toward polar residues: residues 1107-1178 (EEPS…TSYT), 1190-1206 (PAQT…NYTK), 1217-1242 (PAQT…NYTV), 1251-1484 (EEPS…TNYT), and 1496-1601 (PAQT…TSYS). The C2H2-type 6; degenerate zinc-finger motif lies at 1859–1881 (NECKECGECFATVEDLGRHQKIY). A disordered region spans residues 1900–1921 (LGLDGSPEEELEEQEEPEEPED). Acidic residues predominate over residues 1905 to 1921 (SPEEELEEQEEPEEPED). 5 consecutive C2H2-type zinc fingers follow at residues 1924–1946 (YGCK…QKVH), 1980–2002 (YECP…QKVH), 2040–2062 (PQCQ…ARGH), 2097–2119 (YECE…MRVH), and 2148–2170 (YECK…QKLH). The disordered stretch occupies residues 2059–2102 (ARGHAGEGLPDQGQGGAGAAGPGPAPTEPQQDPGEEQRYECETC). Residues 2204–2322 (NVEAAEPEVE…DCGECGETFP (119 aa)) form a disordered region. 2 stretches are compositionally biased toward acidic residues: residues 2208-2228 (AEPE…EVEA) and 2257-2311 (EQPD…EEPY). 2 C2H2-type zinc fingers span residues 2312–2334 (YDCG…LTAH) and 2363–2385 (FKCD…QNTH).

This sequence belongs to the krueppel C2H2-type zinc-finger protein family. Homodimer. Interacts with SIAH1A and SIAH2. Interacts with TRAF2. In terms of tissue distribution, expressed at high levels in the cerebellum and at moderate levels in the testis and ovary.

The protein resides in the nucleus. It is found in the cytoplasm. In terms of biological role, induces apoptosis in cooperation with SIAH1A. Acts as a mediator between p53/TP53 and BAX in a neuronal death pathway that is activated by DNA damage. Acts synergistically with TRAF2 and inhibits TNF induced apoptosis through activation of NF-kappa-B. This Bos taurus (Bovine) protein is Paternally-expressed gene 3 protein (PEG3).